A 1063-amino-acid polypeptide reads, in one-letter code: Cobalt-zinc-cadmium resistance protein CzcA (1063 aa).

12 helical membrane-spanning segments follow: residues 14 to 34 (WLVL…YNRL), 350 to 370 (GAVL…AALI), 371 to 391 (TATI…NYKI), 395 to 415 (LMSL…VIVE), 452 to 472 (LIFG…LTGV), 487 to 507 (ALLG…ALFI), 534 to 554 (LANT…CVAI), 883 to 903 (VVVP…FNNI), 906 to 926 (GLLV…ALWI), 937 to 957 (VGFI…LSFI), 981 to 1001 (PVLM…IATG), and 1013 to 1033 (VVIG…PVLY). Residues 1040-1063 (DEDAEDTREPVTQTHQPDQGRQPA) form a disordered region. Residues 1049-1063 (PVTQTHQPDQGRQPA) are compositionally biased toward polar residues.

It belongs to the resistance-nodulation-cell division (RND) (TC 2.A.6) family.

The protein localises to the cell inner membrane. Functionally, has a low cation transport activity for cobalt, it is essential for the expression of cobalt, zinc, and cadmium resistance. CzcA and CzcB together would act in zinc efflux nearly as effectively as the complete CZC efflux system (CzcABC). This Cupriavidus metallidurans (strain ATCC 43123 / DSM 2839 / NBRC 102507 / CH34) (Ralstonia metallidurans) protein is Cobalt-zinc-cadmium resistance protein CzcA (czcA).